A 157-amino-acid polypeptide reads, in one-letter code: Ribosome-binding factor A (157 aa).

Residues 124–157 are disordered; that stretch reads SAGAQFAGDADPYRKPESDDESDTAAKTDGDAAE. Residues 147–157 are compositionally biased toward basic and acidic residues; it reads TAAKTDGDAAE.

Belongs to the RbfA family. In terms of assembly, monomer. Binds 30S ribosomal subunits, but not 50S ribosomal subunits or 70S ribosomes.

The protein localises to the cytoplasm. Its function is as follows. One of several proteins that assist in the late maturation steps of the functional core of the 30S ribosomal subunit. Associates with free 30S ribosomal subunits (but not with 30S subunits that are part of 70S ribosomes or polysomes). Required for efficient processing of 16S rRNA. May interact with the 5'-terminal helix region of 16S rRNA. This Streptomyces avermitilis (strain ATCC 31267 / DSM 46492 / JCM 5070 / NBRC 14893 / NCIMB 12804 / NRRL 8165 / MA-4680) protein is Ribosome-binding factor A.